Reading from the N-terminus, the 210-residue chain is ATP-dependent dethiobiotin synthetase BioD (210 aa).

Residue N12–H17 coordinates ATP. Residue T16 coordinates Mg(2+). K37 is an active-site residue. A substrate-binding site is contributed by T41. Position 114 (E114) interacts with Mg(2+). E114–G117 contacts ATP.

It belongs to the dethiobiotin synthetase family. As to quaternary structure, homodimer. Requires Mg(2+) as cofactor.

It localises to the cytoplasm. It carries out the reaction (7R,8S)-7,8-diammoniononanoate + CO2 + ATP = (4R,5S)-dethiobiotin + ADP + phosphate + 3 H(+). Its pathway is cofactor biosynthesis; biotin biosynthesis; biotin from 7,8-diaminononanoate: step 1/2. Its function is as follows. Catalyzes a mechanistically unusual reaction, the ATP-dependent insertion of CO2 between the N7 and N8 nitrogen atoms of 7,8-diaminopelargonic acid (DAPA, also called 7,8-diammoniononanoate) to form a ureido ring. The sequence is that of ATP-dependent dethiobiotin synthetase BioD from Sulfurovum sp. (strain NBC37-1).